Consider the following 160-residue polypeptide: Transcription elongation factor GreA (160 aa).

Residues Ala-2–Glu-81 are a coiled coil. Residues Lys-36–Asp-55 are disordered.

Belongs to the GreA/GreB family.

Necessary for efficient RNA polymerase transcription elongation past template-encoded arresting sites. The arresting sites in DNA have the property of trapping a certain fraction of elongating RNA polymerases that pass through, resulting in locked ternary complexes. Cleavage of the nascent transcript by cleavage factors such as GreA or GreB allows the resumption of elongation from the new 3'terminus. GreA releases sequences of 2 to 3 nucleotides. This is Transcription elongation factor GreA from Lachnoclostridium phytofermentans (strain ATCC 700394 / DSM 18823 / ISDg) (Clostridium phytofermentans).